Here is a 314-residue protein sequence, read N- to C-terminus: Serine protease 46 (314 aa).

Residues 44-281 form the Peptidase S1 domain; the sequence is VVNGKAVEVG…FTQWIKRQIG (238 aa). An intrachain disulfide couples C69 to C85. Residues H84 and D130 each act as charge relay system in the active site. 3 disulfides stabilise this stretch: C164–C239, C197–C219, and C229–C257. S233 functions as the Charge relay system in the catalytic mechanism. The helical transmembrane segment at 293–313 threads the bilayer; sequence FLSPFILTGYILLVSLGSLWL.

It belongs to the peptidase S1 family.

The protein resides in the membrane. This is Serine protease 46 (Prss46) from Mus musculus (Mouse).